The chain runs to 40 residues: Metallothionein-1 (40 aa).

It belongs to the metallothionein superfamily. Type 5 family.

This protein binds cations of several transition elements. It is thought to be involved in detoxification processes. The polypeptide is Metallothionein-1 (MtnA) (Drosophila ananassae (Fruit fly)).